Consider the following 292-residue polypeptide: High-affinity heme uptake system protein IsdE (292 aa).

A signal peptide spans M1–S19. C20 is lipidated: N-palmitoyl cysteine. C20 is lipidated: S-diacylglycerol cysteine. The 257-residue stretch at R35–K291 folds into the Fe/B12 periplasmic-binding domain. Residues V41, A42, S60, Y61, M78, and H229 each coordinate heme.

It belongs to the bacterial solute-binding protein 8 family. Requires heme b as cofactor.

The protein resides in the cell membrane. Functionally, involved in heme (porphyrin) scavenging. Binds Fe(2+) and Fe(3+) heme but the largest fraction is Fe(2+) heme. Functions as a high-affinity heme binding protein and probably has a role in relaying heme-iron from cell wall-anchored isd proteins receptors to the probable permease IsdF. The polypeptide is High-affinity heme uptake system protein IsdE (isdE) (Staphylococcus aureus (strain bovine RF122 / ET3-1)).